The primary structure comprises 476 residues: Adenosylhomocysteinase (476 aa).

Residues threonine 67, aspartate 142, and glutamate 202 each contribute to the substrate site. Residue 203-205 (TTT) participates in NAD(+) binding. Substrate is bound by residues lysine 232 and aspartate 236. NAD(+) is bound by residues asparagine 237, 266 to 271 (GYGDVG), glutamate 289, asparagine 324, 345 to 347 (IGH), and asparagine 390.

The protein belongs to the adenosylhomocysteinase family. The cofactor is NAD(+).

The protein localises to the cytoplasm. The catalysed reaction is S-adenosyl-L-homocysteine + H2O = L-homocysteine + adenosine. It functions in the pathway amino-acid biosynthesis; L-homocysteine biosynthesis; L-homocysteine from S-adenosyl-L-homocysteine: step 1/1. In terms of biological role, may play a key role in the regulation of the intracellular concentration of adenosylhomocysteine. This is Adenosylhomocysteinase from Prochlorococcus marinus (strain MIT 9313).